Here is a 245-residue protein sequence, read N- to C-terminus: 1-(5-phosphoribosyl)-5-[(5-phosphoribosylamino)methylideneamino] imidazole-4-carboxamide isomerase (245 aa).

Asp7 serves as the catalytic Proton acceptor. The Proton donor role is filled by Asp129.

This sequence belongs to the HisA/HisF family.

It localises to the cytoplasm. The catalysed reaction is 1-(5-phospho-beta-D-ribosyl)-5-[(5-phospho-beta-D-ribosylamino)methylideneamino]imidazole-4-carboxamide = 5-[(5-phospho-1-deoxy-D-ribulos-1-ylimino)methylamino]-1-(5-phospho-beta-D-ribosyl)imidazole-4-carboxamide. The protein operates within amino-acid biosynthesis; L-histidine biosynthesis; L-histidine from 5-phospho-alpha-D-ribose 1-diphosphate: step 4/9. The chain is 1-(5-phosphoribosyl)-5-[(5-phosphoribosylamino)methylideneamino] imidazole-4-carboxamide isomerase from Shewanella putrefaciens (strain CN-32 / ATCC BAA-453).